The sequence spans 333 residues: Ketol-acid reductoisomerase (NAD(P)(+)) (333 aa).

The region spanning 2 to 182 (AKIYYDEDAS…GATRAGVIET (181 aa)) is the KARI N-terminal Rossmann domain. NADP(+) contacts are provided by residues 25–28 (YGSQ), Ser-51, and 83–86 (DTVQ). Residue His-108 is part of the active site. NADP(+) is bound at residue Gly-134. A KARI C-terminal knotted domain is found at 183-327 (TFREETETDL…KELRQMMPWL (145 aa)). The Mg(2+) site is built by Asp-191, Glu-195, Glu-227, and Glu-231. Ser-252 provides a ligand contact to substrate.

The protein belongs to the ketol-acid reductoisomerase family. Mg(2+) is required as a cofactor.

It catalyses the reaction (2R)-2,3-dihydroxy-3-methylbutanoate + NAD(+) = (2S)-2-acetolactate + NADH + H(+). The enzyme catalyses (2R)-2,3-dihydroxy-3-methylbutanoate + NADP(+) = (2S)-2-acetolactate + NADPH + H(+). The protein operates within amino-acid biosynthesis; L-isoleucine biosynthesis; L-isoleucine from 2-oxobutanoate: step 2/4. Its pathway is amino-acid biosynthesis; L-valine biosynthesis; L-valine from pyruvate: step 2/4. Functionally, involved in the biosynthesis of branched-chain amino acids (BCAA). Catalyzes an alkyl-migration followed by a ketol-acid reduction of (S)-2-acetolactate (S2AL) to yield (R)-2,3-dihydroxy-isovalerate. In the isomerase reaction, S2AL is rearranged via a Mg-dependent methyl migration to produce 3-hydroxy-3-methyl-2-ketobutyrate (HMKB). In the reductase reaction, this 2-ketoacid undergoes a metal-dependent reduction by NADPH or NADH to yield (R)-2,3-dihydroxy-isovalerate. The chain is Ketol-acid reductoisomerase (NAD(P)(+)) from Hydrogenobaculum sp. (strain Y04AAS1).